Here is a 76-residue protein sequence, read N- to C-terminus: Serine proteinase inhibitor IA-2 (76 aa).

Ser1 is modified (N-acetylserine).

The protein belongs to the protease inhibitor I9 family.

In terms of biological role, specifically inhibits an intracellular serine proteinase (proteinase A). The chain is Serine proteinase inhibitor IA-2 from Pleurotus ostreatus (Oyster mushroom).